The following is a 1137-amino-acid chain: Phytochrome C (1137 aa).

The segment covering 1–18 has biased composition (low complexity); the sequence is MSSSRSNNRATCSRSSSA. The disordered stretch occupies residues 1 to 27; it reads MSSSRSNNRATCSRSSSARSKHSARVV. Residues 217–400 enclose the GAF domain; the sequence is NLSLLCDVLV…VFGIQINKEV (184 aa). Residue Cys322 participates in phytochromobilin binding. PAS domains are found at residues 620 to 690 and 750 to 824; these read VTNE…LQGI and IQGD…TKLS. The Histidine kinase domain occupies 904–1124; the sequence is YIRQELRNPL…IVLVEFPVAQ (221 aa).

The protein belongs to the phytochrome family. In terms of assembly, homodimer. In terms of processing, contains one covalently linked phytochromobilin chromophore.

In terms of biological role, regulatory photoreceptor which exists in two forms that are reversibly interconvertible by light: the Pr form that absorbs maximally in the red region of the spectrum and the Pfr form that absorbs maximally in the far-red region. Photoconversion of Pr to Pfr induces an array of morphogenic responses, whereas reconversion of Pfr to Pr cancels the induction of those responses. Pfr controls the expression of a number of nuclear genes including those encoding the small subunit of ribulose-bisphosphate carboxylase, chlorophyll A/B binding protein, protochlorophyllide reductase, rRNA, etc. It also controls the expression of its own gene(s) in a negative feedback fashion. The sequence is that of Phytochrome C (PHYC) from Oryza sativa subsp. indica (Rice).